The following is a 254-amino-acid chain: Proteasome activator complex subunit 3 (254 aa).

An N-acetylalanine modification is found at Ala2. A phosphoserine mark is found at Ser17 and Ser24. N6-acetyllysine; by P300/CBP is present on Lys195. Ser247 carries the post-translational modification Phosphoserine; by CHEK2.

It belongs to the PA28 family. Homoheptamer; the stability of the heptamer is essential for the specific activation of the trypsine-like subunit and inhibition of the chymotrypsin-like and postglutamyl-preferring (PGPH) subunits of the proteasome. Interacts with p53/TP53, MDM2 and MAP3K3. Associates with the proteasome. Interacts with CCAR2. Interacts with PSME3IP1 (via C-terminus); the interaction is direct and promotes the association of PSME3 with the 20S proteasome. Interacts with COIL; the interaction is inhibited by PSME3IP1. In terms of processing, phosphorylated by MAP3K3. Phosphorylation at Ser-247 promotes its association with CCAR2. Acetylation at the major site Lys-195 is important for oligomerization and ability to degrade its target substrates. Deacetylated by SIRT1.

The protein resides in the nucleus. It localises to the cytoplasm. Subunit of the 11S REG-gamma (also called PA28-gamma) proteasome regulator, a doughnut-shaped homoheptamer which associates with the proteasome. 11S REG-gamma activates the trypsin-like catalytic subunit of the proteasome but inhibits the chymotrypsin-like and postglutamyl-preferring (PGPH) subunits. Facilitates the MDM2-p53/TP53 interaction which promotes ubiquitination- and MDM2-dependent proteasomal degradation of p53/TP53, limiting its accumulation and resulting in inhibited apoptosis after DNA damage. May also be involved in cell cycle regulation. Mediates CCAR2 and CHEK2-dependent SIRT1 inhibition. This Pongo abelii (Sumatran orangutan) protein is Proteasome activator complex subunit 3 (PSME3).